Reading from the N-terminus, the 102-residue chain is uncharacterized protein (102 aa).

A helical transmembrane segment spans residues 36–55 (IISLLAIFIKMCLWLWKQFL).

It is found in the membrane. This is an uncharacterized protein from Homo sapiens (Human).